Reading from the N-terminus, the 400-residue chain is uncharacterized protein (400 aa).

An N-terminal signal peptide occupies residues 1 to 31; it reads MENPIKPVATRSIGIAVVLLVVGIVIGFAVG.

This sequence belongs to the bacterial solute-binding protein 1 family. WtpA subfamily.

This is an uncharacterized protein from Thermoplasma acidophilum (strain ATCC 25905 / DSM 1728 / JCM 9062 / NBRC 15155 / AMRC-C165).